The chain runs to 68 residues: Small ribosomal subunit protein bS21 (68 aa).

The protein belongs to the bacterial ribosomal protein bS21 family.

The protein is Small ribosomal subunit protein bS21 of Cereibacter sphaeroides (strain ATCC 17029 / ATH 2.4.9) (Rhodobacter sphaeroides).